We begin with the raw amino-acid sequence, 357 residues long: Phenylalanine--tRNA ligase alpha subunit (357 aa).

Glutamate 278 provides a ligand contact to Mg(2+).

The protein belongs to the class-II aminoacyl-tRNA synthetase family. Phe-tRNA synthetase alpha subunit type 1 subfamily. Tetramer of two alpha and two beta subunits. Mg(2+) serves as cofactor.

The protein resides in the cytoplasm. The enzyme catalyses tRNA(Phe) + L-phenylalanine + ATP = L-phenylalanyl-tRNA(Phe) + AMP + diphosphate + H(+). In Albidiferax ferrireducens (strain ATCC BAA-621 / DSM 15236 / T118) (Rhodoferax ferrireducens), this protein is Phenylalanine--tRNA ligase alpha subunit.